Consider the following 527-residue polypeptide: Zinc finger imprinted 2 (527 aa).

Residues 1–16 (MYQPEDDNNSDVTSDD) are compositionally biased toward acidic residues. The disordered stretch occupies residues 1–104 (MYQPEDDNNS…SRSQDAESYQ (104 aa)). 3 stretches are compositionally biased toward basic and acidic residues: residues 17-26 (DMTRNRRESS), 35-56 (SGDR…DRWS), and 80-99 (FEMD…RSQD). Residues 176–246 (VTFEDVLVDF…ETDSRHTVIC (71 aa)) form the KRAB domain. Positions 247–322 (QGESHDDPLE…GICTSPQSAS (76 aa)) are disordered. Residues 259–275 (QGNQEKLLTPITMNDPK) are compositionally biased toward polar residues. The span at 297–307 (QSKDPLGKDPQ) shows a compositional bias: basic and acidic residues. C2H2-type zinc fingers lie at residues 328–350 (NRCE…ERIH), 356–378 (YECK…QKTH), 412–434 (FECF…LKAH), 466–488 (CQCC…YRTH), and 494–516 (YQCQ…YQLH).

Belongs to the krueppel C2H2-type zinc-finger protein family. As to expression, highest levels of expression in adult testis; modest levels in fetal kidney and brain.

The protein resides in the nucleus. Functionally, may be involved in transcriptional regulation. The polypeptide is Zinc finger imprinted 2 (ZIM2) (Homo sapiens (Human)).